The chain runs to 163 residues: MMNKITHYFKSLLLLELLGGLWLTLKYTFKPKYTVLYPMEKFPQSPRFRGLHALRRYPNGEERCIACKLCEAVCPALAITIDSAKREDGTRRTTRYDIDLFKCIFCGFCEESCPVDSIVETHILEYHFEKRGENIINKPQLLAIGDRLETEIAERRAADAAFR.

2 4Fe-4S ferredoxin-type domains span residues 54–84 (LRRYPNGEERCIACKLCEAVCPALAITIDSA) and 94–123 (TRYDIDLFKCIFCGFCEESCPVDSIVETHI). Positions 64, 67, 70, 74, 103, 106, 109, and 113 each coordinate [4Fe-4S] cluster.

This sequence belongs to the complex I 23 kDa subunit family. As to quaternary structure, NDH-1 is composed of 14 different subunits. Subunits NuoA, H, J, K, L, M, N constitute the membrane sector of the complex. [4Fe-4S] cluster serves as cofactor.

The protein localises to the cell inner membrane. The enzyme catalyses a quinone + NADH + 5 H(+)(in) = a quinol + NAD(+) + 4 H(+)(out). Functionally, NDH-1 shuttles electrons from NADH, via FMN and iron-sulfur (Fe-S) centers, to quinones in the respiratory chain. The immediate electron acceptor for the enzyme in this species is believed to be ubiquinone. Couples the redox reaction to proton translocation (for every two electrons transferred, four hydrogen ions are translocated across the cytoplasmic membrane), and thus conserves the redox energy in a proton gradient. This is NADH-quinone oxidoreductase subunit I from Xanthomonas oryzae pv. oryzae (strain KACC10331 / KXO85).